The primary structure comprises 122 residues: Probable F-box protein At4g23960 (122 aa).

The F-box domain maps to 1–45; it reads MIEQLFPEVTCYALRYLDYSSLCQLSMTSSSMRKTANDDVLWRAL.

In Arabidopsis thaliana (Mouse-ear cress), this protein is Probable F-box protein At4g23960.